The chain runs to 664 residues: Probable 3',5'-cyclic phosphodiesterase pde-1 (664 aa).

Disordered regions lie at residues 24 to 60 and 113 to 142; these read TSSA…SIKI and RNQK…KSYD. 2 stretches are compositionally biased toward basic and acidic residues: residues 28 to 38 and 114 to 130; these read SEEHGDSDKKL and NQKE…EKEP. Residues 256 to 634 enclose the PDEase domain; sequence VQCPIPPEIA…AHWKERAAKE (379 aa). The active-site Proton donor is His333. 4 residues coordinate a divalent metal cation: His337, His373, Asp374, and Asp480. Disordered stretches follow at residues 564–597 and 630–664; these read DSLF…TSPS and RAAK…VTTN. A compositionally biased stretch (basic and acidic residues) spans 630–644; sequence RAAKEEEERKIKEAA.

Belongs to the cyclic nucleotide phosphodiesterase family. Interacts with cmd-1 in the presence of Ca(2+). The cofactor is a divalent metal cation. In terms of tissue distribution, expressed in AFD thermosensory neurons.

It catalyses the reaction a nucleoside 3',5'-cyclic phosphate + H2O = a nucleoside 5'-phosphate + H(+). Functionally, redundantly with pde-5, plays a role in the AFD thermosensory neurons to regulate microvilli receptive ending morphology, possibly by regulating cGMP levels. This Caenorhabditis elegans protein is Probable 3',5'-cyclic phosphodiesterase pde-1 (pde-1).